Here is a 140-residue protein sequence, read N- to C-terminus: Lysozyme c-1 (140 aa).

The first 20 residues, 1-20, serve as a signal peptide directing secretion; the sequence is MKVFSTVLLAIVACCAVAEA. In terms of domain architecture, C-type lysozyme spans 21–140; that stretch reads KTFGKCELAK…KKLPNVSSCF (120 aa). Cystine bridges form between cysteine 26–cysteine 139, cysteine 47–cysteine 128, cysteine 81–cysteine 94, and cysteine 90–cysteine 108. Residues glutamate 52 and aspartate 69 contribute to the active site.

Belongs to the glycosyl hydrolase 22 family. Expressed in salivary glands and Malpighian tubules.

The enzyme catalyses Hydrolysis of (1-&gt;4)-beta-linkages between N-acetylmuramic acid and N-acetyl-D-glucosamine residues in a peptidoglycan and between N-acetyl-D-glucosamine residues in chitodextrins.. Its function is as follows. Lysozymes have primarily a bacteriolytic function; those in tissues and body fluids are associated with the monocyte-macrophage system and enhance the activity of immunoagents. The sequence is that of Lysozyme c-1 from Anopheles gambiae (African malaria mosquito).